The chain runs to 279 residues: Pantothenate synthetase (279 aa).

26-33 contacts ATP; the sequence is MGNLHDGH. Catalysis depends on H33, which acts as the Proton donor. (R)-pantoate is bound at residue Q57. Q57 contacts beta-alanine. Residue 144–147 participates in ATP binding; the sequence is GKKD. Residue Q150 coordinates (R)-pantoate. ATP-binding positions include V173 and 181–184; that span reads LSSR.

It belongs to the pantothenate synthetase family. As to quaternary structure, homodimer.

Its subcellular location is the cytoplasm. It carries out the reaction (R)-pantoate + beta-alanine + ATP = (R)-pantothenate + AMP + diphosphate + H(+). Its pathway is cofactor biosynthesis; (R)-pantothenate biosynthesis; (R)-pantothenate from (R)-pantoate and beta-alanine: step 1/1. In terms of biological role, catalyzes the condensation of pantoate with beta-alanine in an ATP-dependent reaction via a pantoyl-adenylate intermediate. The polypeptide is Pantothenate synthetase (Burkholderia mallei (strain NCTC 10229)).